Here is a 134-residue protein sequence, read N- to C-terminus: Large ribosomal subunit protein eL14y (134 aa).

Belongs to the eukaryotic ribosomal protein eL14 family.

This chain is Large ribosomal subunit protein eL14y (RPL14B), found in Arabidopsis thaliana (Mouse-ear cress).